The primary structure comprises 546 residues: Chaperonin GroEL (546 aa).

ATP contacts are provided by residues T30–P33, K51, D87–T91, G415, N479–A481, and D495. The tract at residues K526–F546 is disordered. A compositionally biased stretch (gly residues) spans A534–F546.

This sequence belongs to the chaperonin (HSP60) family. In terms of assembly, forms a cylinder of 14 subunits composed of two heptameric rings stacked back-to-back. Interacts with the co-chaperonin GroES.

It is found in the cytoplasm. It carries out the reaction ATP + H2O + a folded polypeptide = ADP + phosphate + an unfolded polypeptide.. In terms of biological role, together with its co-chaperonin GroES, plays an essential role in assisting protein folding. The GroEL-GroES system forms a nano-cage that allows encapsulation of the non-native substrate proteins and provides a physical environment optimized to promote and accelerate protein folding. This Xanthomonas oryzae pv. oryzae (strain MAFF 311018) protein is Chaperonin GroEL.